The primary structure comprises 534 residues: Unguisins hydrolase ungD' (534 aa).

It belongs to the peptidase S12 family.

It participates in secondary metabolite biosynthesis. In terms of biological role, hydrolase; part of the gene cluster that mediates the biosynthesis of the unguisins, gamma-aminobutyric acid (GABA)-containing fungal cyclic heptapeptides with the amino acid sequence cyclo-(D-Ala1-D-Val2-L-Leu3-beta-MePhe4-D-Ala5-D-Trp6-GABA7) for unguisin H and cyclo-(D-Ala1-D-Ala2-L-Leu3-beta-MePhe4-D-Ala5-D-Trp6-GABA7) for unguisin I. Within the pathway, the hydrolase ungD' catalyzes the hydrolysis between the D-tryptophan and GABA residues of unguisins H and I to produce the corresponding linear peptides. The alanine racemase ungC' catalyzes the interconversion of L-alanine and D-alanine, providing the D-alanine which is accepted by the first adenylation domain of the nonribosomal peptide synthetase (NRPS) ungA', whereas the methyltransferase ungE' provides the (2R,3R)-beta-methylphenylalanine residue incorporated by the module 4. UngA' is the main enzyme within the cluster which condenses the 7 residues using its respective 7 modules. The terminal condensation domain (Ct) is involved in cyclization with D-alanine and thereby releasing of unguisins H and I. The protein is Unguisins hydrolase ungD' of Aspergillus campestris (strain IBT 28561).